Consider the following 456-residue polypeptide: Phospholipase A1 member A (456 aa).

The first 25 residues, 1-25 (MRPGLWETCFWLWGPLLWLSIGSSG), serve as a signal peptide directing secretion. Ser-166 serves as the catalytic Nucleophile. The Charge relay system role is filled by Asp-190. A disulfide bond links Cys-245 and Cys-258. His-260 functions as the Charge relay system in the catalytic mechanism. 2 cysteine pairs are disulfide-bonded: Cys-282–Cys-293 and Cys-296–Cys-304. Asn-365 carries N-linked (GlcNAc...) asparagine glycosylation.

It belongs to the AB hydrolase superfamily. Lipase family.

The protein resides in the secreted. The catalysed reaction is a 1,2-diacyl-sn-glycero-3-phospho-L-serine + H2O = a 2-acyl-sn-glycero-3-phospho-L-serine + a fatty acid + H(+). The enzyme catalyses 1,2-di-(9Z)-octadecenoyl-sn-glycero-3-phospho-L-serine + H2O = 2-(9Z-octadecenoyl)-sn-glycero-3-phospho-L-serine + (9Z)-octadecenoate + H(+). It carries out the reaction 1-hexadecanoyl-2-(5Z,8Z,11Z,14Z-eicosatetraenoyl)-sn-glycero-3-phospho-L-serine + H2O = 2-(5Z,8Z,11Z,14Z)-eicosatetraenoyl-sn-glycero-3-phospho-L-serine + hexadecanoate + H(+). It catalyses the reaction a 1-acyl-sn-glycero-3-phospho-L-serine + H2O = sn-glycero-3-phospho-L-serine + a fatty acid + H(+). The catalysed reaction is 1-(9Z-octadecenoyl)-sn-glycero-3-phospho-L-serine + H2O = sn-glycero-3-phospho-L-serine + (9Z)-octadecenoate + H(+). In terms of biological role, hydrolyzes the ester bond of the acyl group attached at the sn-1 position of phosphatidylserines (phospholipase A1 activity) and 1-acyl-2-lysophosphatidylserines (lysophospholipase activity) in the pathway of phosphatidylserines acyl chain remodeling. Cleaves phosphatidylserines exposed on the outer leaflet of the plasma membrane of apoptotic cells producing 2-acyl-1-lysophosphatidylserines, which in turn enhance mast cell activation and histamine production. Has no activity toward other glycerophospholipids including phosphatidylcholines, phosphatidylethanolamines, phosphatidic acids or phosphatidylinositols, or glycerolipids such as triolein. This chain is Phospholipase A1 member A, found in Mus musculus (Mouse).